Here is a 466-residue protein sequence, read N- to C-terminus: Argininosuccinate lyase (466 aa).

Belongs to the lyase 1 family. Argininosuccinate lyase subfamily.

Its subcellular location is the cytoplasm. The catalysed reaction is 2-(N(omega)-L-arginino)succinate = fumarate + L-arginine. Its pathway is amino-acid biosynthesis; L-arginine biosynthesis; L-arginine from L-ornithine and carbamoyl phosphate: step 3/3. The protein is Argininosuccinate lyase of Desulfovibrio desulfuricans (strain ATCC 27774 / DSM 6949 / MB).